A 461-amino-acid chain; its full sequence is Cytochrome c biogenesis protein CcsB (461 aa).

The next 3 helical transmembrane spans lie at 32–52 (LRLAIALLLIIALFSISGTVI), 91–111 (TWWFLSLLVLFGTSLTACTFT), and 178–198 (IGPIIVHIGIVTILLGSIWGA).

This sequence belongs to the Ccs1/CcsB family. As to quaternary structure, may interact with CcsA.

Its subcellular location is the cellular thylakoid membrane. In terms of biological role, required during biogenesis of c-type cytochromes (cytochrome c6 and cytochrome f) at the step of heme attachment. The polypeptide is Cytochrome c biogenesis protein CcsB (Nostoc sp. (strain PCC 7120 / SAG 25.82 / UTEX 2576)).